Consider the following 420-residue polypeptide: MSGDTCVQTWPCSYYLELEKRWVPGRLSLTSLSLKFMTDKTRETLVSFPLSSIIEIKKEASHFIFSSITILERDHSKHWFSSLQPSRNAVFSVIEHFWRELLLSESGAAAEAASSSMTKGKELTCLMACTQKRLEDTARVLHHQGEQLDGISRGLDKMESDLDVADRLLTELESPSWWPFSSKLWKTPSETKPKWDASMADSKAFGKEGIVIQVPAVISQRTESHVKPGRLTVLVSGLEIYNSDSLLMHRFEREDVDDIKVHTPYEISICQRFIGKPDISYRLISAKMPEVIPILEVQFSKKIELLEVAMMLGSTRTSSLAEKGYSVWHAASGLMDQATHCEPSSGSQEGRPLQLQTSEPVISEEDTQELGQILRKLKGLALDTETELERQDEALDGITEAVDRATLTIDKHNRRMKKLT.

2 consecutive t-SNARE coiled-coil homology domains span residues 110-172 (AEAA…LTEL) and 357-419 (TSEP…MKKL). The segment at 338-357 (ATHCEPSSGSQEGRPLQLQT) is disordered. Positions 342-357 (EPSSGSQEGRPLQLQT) are enriched in polar residues.

It belongs to the SVAP1 family. As to quaternary structure, forms a complex containing SNAP47, VAMP2 and STX1A. Associates with the BLOC-1 complex. Interacts with BLOC1S6.

It localises to the endomembrane system. It is found in the cytoplasm. Its subcellular location is the perinuclear region. May play a role in intracellular membrane fusion. In Bos taurus (Bovine), this protein is Synaptosomal-associated protein 47 (SNAP47).